The following is a 295-amino-acid chain: Urease accessory protein UreD (295 aa).

This sequence belongs to the UreD family. UreD, UreF and UreG form a complex that acts as a GTP-hydrolysis-dependent molecular chaperone, activating the urease apoprotein by helping to assemble the nickel containing metallocenter of UreC. The UreE protein probably delivers the nickel.

It is found in the cytoplasm. Its function is as follows. Required for maturation of urease via the functional incorporation of the urease nickel metallocenter. This Saccharophagus degradans (strain 2-40 / ATCC 43961 / DSM 17024) protein is Urease accessory protein UreD.